Here is a 212-residue protein sequence, read N- to C-terminus: Large ribosomal subunit protein bL25 (212 aa).

Residues Glu-179–Asp-212 form a disordered region.

This sequence belongs to the bacterial ribosomal protein bL25 family. CTC subfamily. Part of the 50S ribosomal subunit; part of the 5S rRNA/L5/L18/L25 subcomplex. Contacts the 5S rRNA. Binds to the 5S rRNA independently of L5 and L18.

This is one of the proteins that binds to the 5S RNA in the ribosome where it forms part of the central protuberance. The polypeptide is Large ribosomal subunit protein bL25 (Corynebacterium urealyticum (strain ATCC 43042 / DSM 7109)).